The primary structure comprises 733 residues: Polyribonucleotide nucleotidyltransferase (733 aa).

Mg(2+)-binding residues include Asp-488 and Asp-494. Positions 555-614 (PRIEVMNIAVDKIRDVIGTGGKVIREIVEQTGAKINIEDDGTIRIASADAKTIEAAKRWI) constitute a KH domain. The 69-residue stretch at 624–692 (GVIYQGTVVK…ERGKVRLSMK (69 aa)) folds into the S1 motif domain. Over residues 711–722 (EQEKYTEETHKS) the composition is skewed to basic and acidic residues. The tract at residues 711-733 (EQEKYTEETHKSENKRRRKKKEE) is disordered. The span at 723-733 (ENKRRRKKKEE) shows a compositional bias: basic residues.

Belongs to the polyribonucleotide nucleotidyltransferase family. Mg(2+) is required as a cofactor.

It localises to the cytoplasm. It carries out the reaction RNA(n+1) + phosphate = RNA(n) + a ribonucleoside 5'-diphosphate. Its function is as follows. Involved in mRNA degradation. Catalyzes the phosphorolysis of single-stranded polyribonucleotides processively in the 3'- to 5'-direction. The chain is Polyribonucleotide nucleotidyltransferase from Bartonella henselae (strain ATCC 49882 / DSM 28221 / CCUG 30454 / Houston 1) (Rochalimaea henselae).